The following is a 147-amino-acid chain: MKLVVQRVTDASVTVDGAVAGRIGPGIMALVGVTHEDTEEDAAYLADKIVNLRIFDDESGKMNLSLLDTGGEILSVSQFTLYGETKKGRRPNFMNAAKPDQALLLYEKWNELLREKGVKVETGIFGAMMDVQLTNSGPVTLIMDSKQ.

Residues 137–138 (GP) carry the Gly-cisPro motif, important for rejection of L-amino acids motif.

Belongs to the DTD family. As to quaternary structure, homodimer.

Its subcellular location is the cytoplasm. It carries out the reaction glycyl-tRNA(Ala) + H2O = tRNA(Ala) + glycine + H(+). It catalyses the reaction a D-aminoacyl-tRNA + H2O = a tRNA + a D-alpha-amino acid + H(+). In terms of biological role, an aminoacyl-tRNA editing enzyme that deacylates mischarged D-aminoacyl-tRNAs. Also deacylates mischarged glycyl-tRNA(Ala), protecting cells against glycine mischarging by AlaRS. Acts via tRNA-based rather than protein-based catalysis; rejects L-amino acids rather than detecting D-amino acids in the active site. By recycling D-aminoacyl-tRNA to D-amino acids and free tRNA molecules, this enzyme counteracts the toxicity associated with the formation of D-aminoacyl-tRNA entities in vivo and helps enforce protein L-homochirality. Upon expression in B.subtilis strain 168 confers resistance to D-Tyr and D-Asp, suggesting it acts on both of these amino acids. The sequence is that of D-aminoacyl-tRNA deacylase from Bacillus amyloliquefaciens (Bacillus velezensis).